We begin with the raw amino-acid sequence, 80 residues long: Clavanin-E (80 aa).

The signal sequence occupies residues Met1–Ser19. Residues Leu20–Lys29 constitute a propeptide that is removed on maturation. At Phe52 the chain carries Phenylalanine amide. The propeptide occupies Asp54–Gln80.

Its subcellular location is the secreted. In terms of biological role, has antimicrobial activity. This is Clavanin-E from Styela clava (Sea squirt).